A 224-amino-acid polypeptide reads, in one-letter code: tRNA (guanine-N(7)-)-methyltransferase (224 aa).

Residues Glu-57, Asp-82, and Asp-109 each coordinate S-adenosyl-L-methionine. Position 167 (Asp-167) interacts with substrate.

This sequence belongs to the class I-like SAM-binding methyltransferase superfamily. TrmB family.

It carries out the reaction guanosine(46) in tRNA + S-adenosyl-L-methionine = N(7)-methylguanosine(46) in tRNA + S-adenosyl-L-homocysteine. It functions in the pathway tRNA modification; N(7)-methylguanine-tRNA biosynthesis. Functionally, catalyzes the formation of N(7)-methylguanine at position 46 (m7G46) in tRNA. The polypeptide is tRNA (guanine-N(7)-)-methyltransferase (Chloroflexus aggregans (strain MD-66 / DSM 9485)).